Here is a 381-residue protein sequence, read N- to C-terminus: Neuropeptide Y receptor type 2 (381 aa).

Residues 1–37 are disordered; the sequence is MGPIGTEADENQTVEEIKVEPYGPGHTTPRGELAPDP. Residues 1 to 52 lie on the Extracellular side of the membrane; it reads MGPIGTEADENQTVEEIKVEPYGPGHTTPRGELAPDPEPELIDSTKLTEVRV. An N-linked (GlcNAc...) asparagine glycan is attached at Asn-11. The helical transmembrane segment at 53 to 73 threads the bilayer; it reads VLILAYCSIILLGVVGNSLVI. Topologically, residues 74–87 are cytoplasmic; the sequence is HVVIKFKSMRTVTN. The helical transmembrane segment at 88–108 threads the bilayer; it reads FFIANLAVADLLVNTLCLPFT. The Extracellular portion of the chain corresponds to 109 to 125; sequence LTYTLMGEWKMGPVLCH. An intrachain disulfide couples Cys-124 to Cys-204. The chain crosses the membrane as a helical span at residues 126–146; the sequence is LVPYAQGLAVQVSTVTLTVIA. Residues 147–166 lie on the Cytoplasmic side of the membrane; it reads LDRHRCIVYHLDSKISKQNS. A helical transmembrane segment spans residues 167–187; that stretch reads FLIIGLAWGISALLASPLAIF. The Extracellular segment spans residues 188–217; that stretch reads REYSLIEIIPDFEIVACTEKWPGEEKSIYG. Residues 218 to 238 traverse the membrane as a helical segment; that stretch reads TVYSLSSLLILYVLPLGIISV. Residues 239-269 are Cytoplasmic-facing; the sequence is SYVRIWSKLKNHVSPGAANDHYHQRRQKTTK. The helical transmembrane segment at 270 to 290 threads the bilayer; that stretch reads MLVFVVVVFAVSWLPLHAFQL. The Extracellular segment spans residues 291–305; that stretch reads AVDIDSQVLDLKEYK. The helical transmembrane segment at 306-326 threads the bilayer; sequence LIFTVFHIIAMCSTFANPLLY. Residues 327–381 lie on the Cytoplasmic side of the membrane; that stretch reads GWMNSNYRKAFLSAFRCQQRLDAIQSEVCVTGKAKTNVEVEKNHGAADSAEATNV. Cys-343 carries S-palmitoyl cysteine lipidation.

Belongs to the G-protein coupled receptor 1 family.

The protein localises to the cell membrane. Its function is as follows. Receptor for neuropeptide Y and peptide YY. The sequence is that of Neuropeptide Y receptor type 2 (NPY2R) from Cavia porcellus (Guinea pig).